The chain runs to 294 residues: MDAKQTRQGVLLALAAYFIWGIAPAYFKLIYYVPADEILTHRVIWSFFFMVALLSVSRQWRQVKRLLKTPKKIFLLALSAVLVGGNWLLFIWAVNNHHMLEASLGYFINPLVNILLGMIFLGERFRRMQWLAVILAVCGVLVQLWTFGSLPIIALGLAFSFAFYGLVRKKIAVEAQTGMLVETLWLLPVAAIYLFGIADSPTSHMGQNALSLNLLLMAAGVVTTIPLLCFTGAATRLRLSTLGFFQYIGPTLMFLLAVTFYGEVPGADKMVTFAFIWVALAIFVMDAIYTQRKK.

At 1-11 (MDAKQTRQGVL) the chain is on the cytoplasmic side. The helical transmembrane segment at 12–34 (LALAAYFIWGIAPAYFKLIYYVP) threads the bilayer. The 128-residue stretch at 18–145 (FIWGIAPAYF…AVCGVLVQLW (128 aa)) folds into the EamA domain. Residues 35-37 (ADE) lie on the Periplasmic side of the membrane. The chain crosses the membrane as a helical span at residues 38–60 (ILTHRVIWSFFFMVALLSVSRQW). Residues 61-72 (RQVKRLLKTPKK) are Cytoplasmic-facing. The helical transmembrane segment at 73-95 (IFLLALSAVLVGGNWLLFIWAVN) threads the bilayer. Residues 96-99 (NHHM) are Periplasmic-facing. A helical membrane pass occupies residues 100-122 (LEASLGYFINPLVNILLGMIFLG). Residues 123 to 128 (ERFRRM) are Cytoplasmic-facing. Residues 129 to 146 (QWLAVILAVCGVLVQLWT) form a helical membrane-spanning segment. The Periplasmic segment spans residues 147–149 (FGS). Residues 150-167 (LPIIALGLAFSFAFYGLV) form a helical membrane-spanning segment. Over 168-179 (RKKIAVEAQTGM) the chain is Cytoplasmic. A helical membrane pass occupies residues 180–197 (LVETLWLLPVAAIYLFGI). Residues 198 to 211 (ADSPTSHMGQNALS) are Periplasmic-facing. The chain crosses the membrane as a helical span at residues 212–234 (LNLLLMAAGVVTTIPLLCFTGAA). Topologically, residues 235 to 238 (TRLR) are cytoplasmic. The helical transmembrane segment at 239 to 261 (LSTLGFFQYIGPTLMFLLAVTFY) threads the bilayer. Topologically, residues 262–270 (GEVPGADKM) are periplasmic. The helical transmembrane segment at 271-290 (VTFAFIWVALAIFVMDAIYT) threads the bilayer. Residues 291 to 294 (QRKK) lie on the Cytoplasmic side of the membrane.

The protein belongs to the EamA transporter family.

Its subcellular location is the cell inner membrane. The polypeptide is Protein RarD (rarD) (Salmonella typhimurium (strain LT2 / SGSC1412 / ATCC 700720)).